Consider the following 432-residue polypeptide: uncharacterized protein (432 aa).

Over residues 1–14 the composition is skewed to polar residues; it reads MSDTTDVPENQKSP. The interval 1–42 is disordered; that stretch reads MSDTTDVPENQKSPKPSGKADKRKIEEKPENSSLKRKKFEDP. Positions 18–30 are enriched in basic and acidic residues; it reads GKADKRKIEEKPE. Residues 85 to 148 form the S4 RNA-binding domain; that stretch reads RKMVEVFSGE…HEHPIRDLPI (64 aa). Residue Asp199 is part of the active site.

It belongs to the pseudouridine synthase RluA family.

This is an uncharacterized protein from Caenorhabditis elegans.